Consider the following 183-residue polypeptide: Archaemetzincin (183 aa).

Position 131 (histidine 131) interacts with Zn(2+). The active-site Proton acceptor is glutamate 132. Positions 135, 141, 142, 147, and 166 each coordinate Zn(2+).

The protein belongs to the peptidase M54 family. As to quaternary structure, monomer. The cofactor is Zn(2+).

Functionally, probable zinc metalloprotease whose natural substrate is unknown. This chain is Archaemetzincin, found in Saccharolobus solfataricus (strain ATCC 35092 / DSM 1617 / JCM 11322 / P2) (Sulfolobus solfataricus).